An 87-amino-acid polypeptide reads, in one-letter code: Cell division topological specificity factor (87 aa).

It belongs to the MinE family.

Its function is as follows. Prevents the cell division inhibition by proteins MinC and MinD at internal division sites while permitting inhibition at polar sites. This ensures cell division at the proper site by restricting the formation of a division septum at the midpoint of the long axis of the cell. This is Cell division topological specificity factor from Acidiphilium cryptum (strain JF-5).